Consider the following 181-residue polypeptide: Inner membrane-spanning protein YciB (181 aa).

The next 5 helical transmembrane spans lie at 10–30 (LVIF…GALI), 50–70 (MHLI…ILHD), 72–92 (SFIK…LGVS), 118–138 (VTWY…YVAF), and 148–168 (FKVF…VVYL).

This sequence belongs to the YciB family.

It localises to the cell inner membrane. Its function is as follows. Plays a role in cell envelope biogenesis, maintenance of cell envelope integrity and membrane homeostasis. The protein is Inner membrane-spanning protein YciB of Shewanella pealeana (strain ATCC 700345 / ANG-SQ1).